The following is a 248-amino-acid chain: Pyridoxine 5'-phosphate synthase (248 aa).

N11 contacts 3-amino-2-oxopropyl phosphate. D13–H14 contributes to the 1-deoxy-D-xylulose 5-phosphate binding site. A 3-amino-2-oxopropyl phosphate-binding site is contributed by R22. H47 acts as the Proton acceptor in catalysis. 1-deoxy-D-xylulose 5-phosphate is bound by residues R49 and H54. Catalysis depends on E74, which acts as the Proton acceptor. Residue T104 participates in 1-deoxy-D-xylulose 5-phosphate binding. The active-site Proton donor is the H198. 3-amino-2-oxopropyl phosphate-binding positions include G199 and G220–H221.

This sequence belongs to the PNP synthase family. As to quaternary structure, homooctamer; tetramer of dimers.

It is found in the cytoplasm. It catalyses the reaction 3-amino-2-oxopropyl phosphate + 1-deoxy-D-xylulose 5-phosphate = pyridoxine 5'-phosphate + phosphate + 2 H2O + H(+). The protein operates within cofactor biosynthesis; pyridoxine 5'-phosphate biosynthesis; pyridoxine 5'-phosphate from D-erythrose 4-phosphate: step 5/5. In terms of biological role, catalyzes the complicated ring closure reaction between the two acyclic compounds 1-deoxy-D-xylulose-5-phosphate (DXP) and 3-amino-2-oxopropyl phosphate (1-amino-acetone-3-phosphate or AAP) to form pyridoxine 5'-phosphate (PNP) and inorganic phosphate. The chain is Pyridoxine 5'-phosphate synthase from Ruegeria pomeroyi (strain ATCC 700808 / DSM 15171 / DSS-3) (Silicibacter pomeroyi).